Reading from the N-terminus, the 435-residue chain is 3-phosphoshikimate 1-carboxyvinyltransferase (435 aa).

Residues K22, S23, and R27 each contribute to the 3-phosphoshikimate site. K22 is a binding site for phosphoenolpyruvate. Phosphoenolpyruvate-binding residues include G94 and R122. Residues S166, Q168, D314, and K341 each contribute to the 3-phosphoshikimate site. Q168 contributes to the phosphoenolpyruvate binding site. D314 acts as the Proton acceptor in catalysis. Phosphoenolpyruvate contacts are provided by R345 and R388.

The protein belongs to the EPSP synthase family. As to quaternary structure, monomer.

The protein resides in the cytoplasm. It catalyses the reaction 3-phosphoshikimate + phosphoenolpyruvate = 5-O-(1-carboxyvinyl)-3-phosphoshikimate + phosphate. It functions in the pathway metabolic intermediate biosynthesis; chorismate biosynthesis; chorismate from D-erythrose 4-phosphate and phosphoenolpyruvate: step 6/7. Functionally, catalyzes the transfer of the enolpyruvyl moiety of phosphoenolpyruvate (PEP) to the 5-hydroxyl of shikimate-3-phosphate (S3P) to produce enolpyruvyl shikimate-3-phosphate and inorganic phosphate. The protein is 3-phosphoshikimate 1-carboxyvinyltransferase of Vesicomyosocius okutanii subsp. Calyptogena okutanii (strain HA).